The sequence spans 246 residues: DNA repair protein RecO (246 aa).

It belongs to the RecO family.

Functionally, involved in DNA repair and RecF pathway recombination. The polypeptide is DNA repair protein RecO (Maridesulfovibrio salexigens (strain ATCC 14822 / DSM 2638 / NCIMB 8403 / VKM B-1763) (Desulfovibrio salexigens)).